The chain runs to 421 residues: Acyl-coenzyme A thioesterase 5 (421 aa).

Residues Ser232, Asp326, and His360 each act as charge relay system in the active site. A Microbody targeting signal motif is present at residues 419-421; sequence AKL.

This sequence belongs to the C/M/P thioester hydrolase family. In terms of tissue distribution, highly expressed in spleen, brain, testis and proximal and distal intestine; expressed at low level in the liver.

The protein localises to the peroxisome. It carries out the reaction hexadecanoyl-CoA + H2O = hexadecanoate + CoA + H(+). The enzyme catalyses decanoyl-CoA + H2O = decanoate + CoA + H(+). It catalyses the reaction octanoyl-CoA + H2O = octanoate + CoA + H(+). The catalysed reaction is dodecanoyl-CoA + H2O = dodecanoate + CoA + H(+). It carries out the reaction tetradecanoyl-CoA + H2O = tetradecanoate + CoA + H(+). The enzyme catalyses octadecanoyl-CoA + H2O = octadecanoate + CoA + H(+). It catalyses the reaction eicosanoyl-CoA + H2O = eicosanoate + CoA + H(+). The catalysed reaction is (9Z)-octadecenoyl-CoA + H2O = (9Z)-octadecenoate + CoA + H(+). It carries out the reaction (9Z,12Z)-octadecadienoyl-CoA + H2O = (9Z,12Z)-octadecadienoate + CoA + H(+). The enzyme catalyses (5Z,8Z,11Z,14Z)-eicosatetraenoyl-CoA + H2O = (5Z,8Z,11Z,14Z)-eicosatetraenoate + CoA + H(+). It catalyses the reaction (9Z)-hexadecenoyl-CoA + H2O = (9Z)-hexadecenoate + CoA + H(+). It participates in lipid metabolism; fatty acid metabolism. Its function is as follows. Catalyzes the hydrolysis of acyl-CoAs into free fatty acids and coenzyme A (CoASH), regulating their respective intracellular levels. Mainly active on medium-chain acyl-CoAs. Seems to be involved in intraperoxisomal regulation of acyl-CoA levels, but not CoASH levels. May have a function in termination of beta-oxidation of fatty acids. The chain is Acyl-coenzyme A thioesterase 5 (Acot5) from Mus musculus (Mouse).